The following is a 365-amino-acid chain: Endophilin-B1 (365 aa).

Position 1 is an N-acetylmethionine (methionine 1). The segment at 1 to 30 is membrane-binding amphipathic helix; sequence MNIMDFNVKKLAADAGTFLSRAVQFTEEKL. The tract at residues 1 to 37 is required for membrane binding; it reads MNIMDFNVKKLAADAGTFLSRAVQFTEEKLGQAEKTE. A BAR domain is found at 27-261; the sequence is EEKLGQAEKT…LGSFPSNYLS (235 aa). A Phosphothreonine; by CDK5 modification is found at threonine 145. Positions 155–195 form a coiled coil; it reads YKTIAKERKLLQNKRLDLDAAKTRLKKAKAAETRNSSEQEL. The 61-residue stretch at 305 to 365 folds into the SH3 domain; sequence SGSRKARVLY…VPITYLELLN (61 aa).

Belongs to the endophilin family. As to quaternary structure, homodimer, and heterodimer with SH3GLB2. Binds BAX; induction of apoptosis augments BAX binding. Binds DNM1, HTT, AMPH, BIN1 and ARFGAP1. Interacts with UVRAG; UVRAG bridges the interaction to BECN1 indicative for an association with the PI3K complex II (PI3KC3-C2). Post-translationally, phosphorylated at Thr-145 by CDK5; this phosphorylation is required for autophagy induction in starved neurons and facilitates homodimerization. Highly expressed in heart, skeletal muscle, kidney and placenta. Detected at lower levels in brain, colon, thymus, spleen, liver, small intestine, lung and peripheral blood leukocytes.

Its subcellular location is the cytoplasm. The protein resides in the golgi apparatus membrane. It localises to the mitochondrion outer membrane. It is found in the cytoplasmic vesicle. The protein localises to the autophagosome membrane. Its subcellular location is the midbody. Functionally, may be required for normal outer mitochondrial membrane dynamics. Required for coatomer-mediated retrograde transport in certain cells. May recruit other proteins to membranes with high curvature. May promote membrane fusion. Involved in activation of caspase-dependent apoptosis by promoting BAX/BAK1 activation. Isoform 1 acts proapoptotic in fibroblasts. Involved in caspase-independent apoptosis during nutrition starvation and involved in the regulation of autophagy. Activates lipid kinase activity of PIK3C3 during autophagy probably by associating with the PI3K complex II (PI3KC3-C2). Associated with PI3KC3-C2 during autophagy may regulate the trafficking of ATG9A from the Golgi complex to the peripheral cytoplasm for the formation of autophagosomes by inducing Golgi membrane tubulation and fragmentation. Involved in regulation of degradative endocytic trafficking and cytokinesis, probably in the context of PI3KC3-C2. Isoform 2 acts antiapoptotic in neuronal cells; involved in maintenance of mitochondrial morphology and promotes neuronal viability. The sequence is that of Endophilin-B1 (SH3GLB1) from Homo sapiens (Human).